The chain runs to 29 residues: GGPAAYSXYXNGADFGAVGEXLGSXSKGL.

In terms of biological role, component of the cuticle of migratory locust which contains more than 100 different structural proteins. This chain is Cuticle protein 36, found in Locusta migratoria (Migratory locust).